Reading from the N-terminus, the 275-residue chain is Nitrogenase iron protein 1 (275 aa).

9–16 is a binding site for ATP; sequence GKGGIGKS. Position 97 (cysteine 97) interacts with [4Fe-4S] cluster. Arginine 100 is modified (ADP-ribosylarginine; by dinitrogenase reductase ADP-ribosyltransferase). Cysteine 132 is a [4Fe-4S] cluster binding site.

Belongs to the NifH/BchL/ChlL family. Homodimer. Requires [4Fe-4S] cluster as cofactor. The reversible ADP-ribosylation of Arg-100 inactivates the nitrogenase reductase and regulates nitrogenase activity.

It catalyses the reaction N2 + 8 reduced [2Fe-2S]-[ferredoxin] + 16 ATP + 16 H2O = H2 + 8 oxidized [2Fe-2S]-[ferredoxin] + 2 NH4(+) + 16 ADP + 16 phosphate + 6 H(+). The key enzymatic reactions in nitrogen fixation are catalyzed by the nitrogenase complex, which has 2 components: the iron protein and the molybdenum-iron protein. This is Nitrogenase iron protein 1 (nifH1) from Methanothermobacter marburgensis (strain ATCC BAA-927 / DSM 2133 / JCM 14651 / NBRC 100331 / OCM 82 / Marburg) (Methanobacterium thermoautotrophicum).